A 261-amino-acid polypeptide reads, in one-letter code: Putative hydro-lyase VSAL_I1435 (261 aa).

Belongs to the D-glutamate cyclase family.

The polypeptide is Putative hydro-lyase VSAL_I1435 (Aliivibrio salmonicida (strain LFI1238) (Vibrio salmonicida (strain LFI1238))).